The following is a 625-amino-acid chain: Prothrombin (625 aa).

The signal sequence occupies residues 1-24 (MARVRGPRLPGCLALAALFSLVHS). The propeptide occupies 25–43 (QHVFLAHQQASSLLQRARR). Residues 44–90 (ANKGFLEEVRKGNLERECLEEPCSREEAFEALESLSATDAFWAKYTA) form the Gla domain. 4-carboxyglutamate occurs at positions 50, 51, 58, 60, 63, 64, 69, 70, 73, and 76. Cys61 and Cys66 are disulfide-bonded. Cystine bridges form between Cys91-Cys104, Cys109-Cys187, Cys130-Cys170, Cys158-Cys182, Cys214-Cys292, Cys235-Cys275, Cys263-Cys287, Cys339-Cys485, Cys394-Cys410, Cys539-Cys553, and Cys567-Cys597. Kringle domains are found at residues 109–187 (CAEG…VPVC) and 214–292 (CVPD…LNYC). N-linked (GlcNAc...) asparagine glycans are attached at residues Asn120 and Asn144. Positions 367–621 (IVEGQDAEVG…LKKWIQKVID (255 aa)) constitute a Peptidase S1 domain. His409 serves as the catalytic Charge relay system. Asn419 carries an N-linked (GlcNAc...) asparagine glycan. Asp465 functions as the Charge relay system in the catalytic mechanism. The high affinity receptor-binding region which is also known as the TP508 peptide stretch occupies residues 554-576 (AGYKPGEGKRGDACEGDSGGPFV). Ser571 (charge relay system) is an active-site residue.

Belongs to the peptidase S1 family. Heterodimer (named alpha-thrombin) of a light and a heavy chain; disulfide-linked. Forms a heterodimer with SERPINA5. In plasma, interacts (via N-terminus) with alpha-1-microglobulin; this interaction does not prevent the activation of prothrombin to thrombin. In terms of processing, the gamma-carboxyglutamyl residues, which bind calcium ions, result from the carboxylation of glutamyl residues by a microsomal enzyme, the vitamin K-dependent carboxylase. The modified residues are necessary for the calcium-dependent interaction with a negatively charged phospholipid surface, which is essential for the conversion of prothrombin to thrombin. Post-translationally, in the penultimate step of the coagulation cascade, prothrombin is converted to thrombin by the prothrombinase complex composed of factor Xa (F10), cofactor Va (F5), and phospholipids. This activation requires factor Xa-catalyzed sequential cleavage at 2 sites, Arg-317 and Arg-366, along 2 possible pathways. In the first pathway, the first cleavage occurs at Arg-317, leading to the formation of the inactive intermediate prethrombin-2. This pathway preferentially occurs on platelets and in the absence of cofactor Va. In the second pathway, the first cleavage occurs at Arg-366, which separates protease domain into 2 chains that remain connected through a disulfide bond and generates the active intermediate meizothrombin. The presence of cofactor Va directs activation along the meizothrombin pathway and greatly accelerates the rate of cleavage at Arg-366, but has a smaller effect on the cleavage of meizothrombin at Arg-317. Meizothrombin accumulates as an intermediate when prothrombinase is assembled on the membrane of red blood cells. As to expression, expressed by the liver and secreted in plasma.

It localises to the secreted. The protein localises to the extracellular space. The enzyme catalyses Selective cleavage of Arg-|-Gly bonds in fibrinogen to form fibrin and release fibrinopeptides A and B.. Its activity is regulated as follows. Activity is promoted in the presence of negatively charged surfaces, such as polyphosphate and dextran sulfate. Inhibited by SERPINA5. Its function is as follows. Thrombin, which cleaves bonds after Arg and Lys, converts fibrinogen to fibrin and activates factors V, VII, VIII, XIII, and, in complex with thrombomodulin, protein C. Functions in blood homeostasis, inflammation and wound healing. Activates coagulation factor XI (F11); activation is promoted by the contact with negatively charged surfaces. Triggers the production of pro-inflammatory cytokines, such as MCP-1/CCL2 and IL8/CXCL8, in endothelial cells. The chain is Prothrombin (F2) from Bos taurus (Bovine).